The primary structure comprises 307 residues: N-acetylmuramic acid 6-phosphate etherase (307 aa).

Residues V62–K225 enclose the SIS domain. The active-site Proton donor is E90. E121 is a catalytic residue.

Belongs to the GCKR-like family. MurNAc-6-P etherase subfamily. In terms of assembly, homodimer.

The catalysed reaction is N-acetyl-D-muramate 6-phosphate + H2O = N-acetyl-D-glucosamine 6-phosphate + (R)-lactate. It functions in the pathway amino-sugar metabolism; 1,6-anhydro-N-acetylmuramate degradation. Its pathway is amino-sugar metabolism; N-acetylmuramate degradation. The protein operates within cell wall biogenesis; peptidoglycan recycling. Its function is as follows. Specifically catalyzes the cleavage of the D-lactyl ether substituent of MurNAc 6-phosphate, producing GlcNAc 6-phosphate and D-lactate. Together with AnmK, is also required for the utilization of anhydro-N-acetylmuramic acid (anhMurNAc) either imported from the medium or derived from its own cell wall murein, and thus plays a role in cell wall recycling. This is N-acetylmuramic acid 6-phosphate etherase from Brucella anthropi (strain ATCC 49188 / DSM 6882 / CCUG 24695 / JCM 21032 / LMG 3331 / NBRC 15819 / NCTC 12168 / Alc 37) (Ochrobactrum anthropi).